The primary structure comprises 366 residues: MASAVLSSVPTTASRFALLQVDSGSGSDSEPGKGKGRNTGKSQTLGSKSTTNEKKREKRRKKKEQQQSEANELRNLAFKKIPQKSSHAVCNAQHDLPLSNPVQKDSREENWQEWRQRDEQLTSEMFEADLEKALLLSKLEYEEHKKEYEDAENTSTQSKVMNKKDKRKNHQGKDRPLTVSLKDFHSEDHISKKTEELSSSQTLSHDGGFFNRLEDDVHKILIREKRREQLTEYNGTDNCTAHEHNQEVVLKDGRIERLKLELERKDAEIQKLKNVITQWEAKYKEVKARNAQLLKMLQEGEMKDKAEILLQVDESQSIKNELTIQVTSLHAALEQERSKVKVLQAELAKYQGGRKGKRNSESDQCR.

Positions 1 to 95 (MASAVLSSVP…SHAVCNAQHD (95 aa)) are interaction with IRS1. 2 disordered regions span residues 20–110 (QVDS…REEN) and 147–177 (EYED…DRPL). Phosphoserine is present on residues Ser23, Ser25, and Ser27. Over residues 39–50 (TGKSQTLGSKST) the composition is skewed to polar residues. The stretch at 47–77 (SKSTTNEKKREKRRKKKEQQQSEANELRNLA) forms a coiled coil. The residue at position 106 (Ser106) is a Phosphoserine; by PKG. Coiled-coil stretches lie at residues 128 to 160 (ADLE…QSKV) and 243 to 353 (EHNQ…YQGG).

The protein belongs to the GKAP1 family. In terms of assembly, interacts with PRKG1 and IRS1.

It is found in the golgi apparatus. Its function is as follows. Regulates insulin-dependent IRS1 tyrosine phosphorylation in adipocytes by modulating the availability of IRS1 to IR tyrosine kinase. Its association with IRS1 is required for insulin-induced translocation of SLC2A4 to the cell membrane. Involved in TNF-induced impairment of insulin-dependent IRS1 tyrosine phosphorylation. The sequence is that of G kinase-anchoring protein 1 (GKAP1) from Homo sapiens (Human).